A 100-amino-acid chain; its full sequence is MKITQEEVSHVAKLSKLAFSPEETAEFATTLTKIVDMVELLNEVDTEGVPFTSNVAANINYMREDVAQPGWNREELFQNVPEKERGYIKVPAILDDGGDA.

The protein belongs to the GatC family. In terms of assembly, heterotrimer of A, B and C subunits.

The catalysed reaction is L-glutamyl-tRNA(Gln) + L-glutamine + ATP + H2O = L-glutaminyl-tRNA(Gln) + L-glutamate + ADP + phosphate + H(+). The enzyme catalyses L-aspartyl-tRNA(Asn) + L-glutamine + ATP + H2O = L-asparaginyl-tRNA(Asn) + L-glutamate + ADP + phosphate + 2 H(+). Functionally, allows the formation of correctly charged Asn-tRNA(Asn) or Gln-tRNA(Gln) through the transamidation of misacylated Asp-tRNA(Asn) or Glu-tRNA(Gln) in organisms which lack either or both of asparaginyl-tRNA or glutaminyl-tRNA synthetases. The reaction takes place in the presence of glutamine and ATP through an activated phospho-Asp-tRNA(Asn) or phospho-Glu-tRNA(Gln). This Streptococcus sanguinis (strain SK36) protein is Aspartyl/glutamyl-tRNA(Asn/Gln) amidotransferase subunit C.